The following is a 149-amino-acid chain: Oligosaccharyltransferase complex subunit ostc (149 aa).

The Cytoplasmic segment spans residues 1 to 32; it reads MESLYRVPFTVLECPNLKLKKPSWLHMPSAMT. The chain crosses the membrane as a helical span at residues 33–53; the sequence is VYAMVVVSYFLITGGIIYDVI. The Extracellular segment spans residues 54–83; sequence VEPPSVGSMTDEHGHQRPVAFLAYRVNGQY. Residues 84-104 traverse the membrane as a helical segment; the sequence is IMEGLASSFLFTMGGLGFIIL. At 105 to 117 the chain is on the cytoplasmic side; it reads DRSNAPNIPKLNR. A helical transmembrane segment spans residues 118 to 138; it reads FLLLFIGFVCVLLSFFMARVF. At 139 to 149 the chain is on the extracellular side; that stretch reads MRMKLPGYLMG.

It belongs to the OSTC family. As to quaternary structure, specific component of the STT3A-containing form of the oligosaccharyltransferase (OST) complex.

The protein localises to the membrane. The protein operates within protein modification; protein glycosylation. In terms of biological role, specific component of the STT3A-containing form of the oligosaccharyl transferase (OST) complex that catalyzes the initial transfer of a defined glycan (Glc(3)Man(9)GlcNAc(2) in eukaryotes) from the lipid carrier dolichol-pyrophosphate to an asparagine residue within an Asn-X-Ser/Thr consensus motif in nascent polypeptide chains, the first step in protein N-glycosylation. N-glycosylation occurs cotranslationally and the complex associates with the Sec61 complex at the channel-forming translocon complex that mediates protein translocation across the endoplasmic reticulum (ER). All subunits are required for a maximal enzyme activity. The chain is Oligosaccharyltransferase complex subunit ostc from Xenopus tropicalis (Western clawed frog).